Here is a 520-residue protein sequence, read N- to C-terminus: Phospholipase C A (520 aa).

Positions 1–38 form a signal peptide, tat-type signal; the sequence is MSASPLLGMSRREFLTKLTGAGAAAFLMDWAAPVIEKA.

This sequence belongs to the bacterial phospholipase C family. Post-translationally, predicted to be exported by the Tat system. The position of the signal peptide cleavage has not been experimentally proven.

Its subcellular location is the secreted. It localises to the cell wall. It catalyses the reaction a 1,2-diacyl-sn-glycero-3-phosphocholine + H2O = phosphocholine + a 1,2-diacyl-sn-glycerol + H(+). Its function is as follows. Involved in virulence. Induces cytotoxic effects on mouse macrophage cell lines, via direct or indirect enzymatic hydrolysis of cell membrane phospholipids. Hydrolyzes phosphatidylcholine. This chain is Phospholipase C A, found in Mycobacterium tuberculosis (strain CDC 1551 / Oshkosh).